The chain runs to 289 residues: Bis(5'-nucleosyl)-tetraphosphatase, symmetrical (289 aa).

Belongs to the Ap4A hydrolase family.

It catalyses the reaction P(1),P(4)-bis(5'-adenosyl) tetraphosphate + H2O = 2 ADP + 2 H(+). Hydrolyzes diadenosine 5',5'''-P1,P4-tetraphosphate to yield ADP. The protein is Bis(5'-nucleosyl)-tetraphosphatase, symmetrical of Yersinia pseudotuberculosis serotype IB (strain PB1/+).